The following is a 1308-amino-acid chain: Transposon TX1 uncharacterized 149 kDa protein (1308 aa).

The Reverse transcriptase domain maps to 494 to 765 (EAFKKGELPL…KIIKYLGVYL (272 aa)).

In Xenopus laevis (African clawed frog), this protein is Transposon TX1 uncharacterized 149 kDa protein.